The primary structure comprises 488 residues: Regulatory protein E2 (488 aa).

Residues 1–201 form a transactivation domain region; the sequence is MEALNARFNV…ETVFAPVTSS (201 aa). Polar residues predominate over residues 196-215; the sequence is APVTSSTPPSTGLRESSNAS. The tract at residues 196-384 is disordered; it reads APVTSSTPPS…ISPDKVGSRV (189 aa). A compositionally biased stretch (low complexity) spans 224–245; that stretch reads TPTSTTATTTTFSTTTATATAT. 2 stretches are compositionally biased toward basic residues: residues 278-291 and 301-311; these read VSRR…RTRR and KASRSRSRSRS. The span at 312–328 shows a compositional bias: low complexity; that stretch reads TSRGSRGSGGSVTTSRD. Residues 332 to 346 show a composition bias toward basic residues; that stretch reads KRTRRGRGRGGRSRR. The DNA-binding domain stretch occupies residues 404-488; it reads DPPVILLRGD…EWSFGNFDKL (85 aa).

This sequence belongs to the papillomaviridae E2 protein family. Binds DNA as homodimer. Interacts with protein E1; this interaction greatly increases E1 DNA-binding activity. Interacts with protein L1; this interaction enhances E2-dependent replication and transcription activation. Interacts with protein L2; this interaction inhibits E2 transcriptional activity but not DNA replication function E2. Interacts with protein E7; this interaction inhibits E7 oncogenic activity. Interacts with host TAF1; this interaction modulates E2-dependent transcriptional regulation. Interacts with host BRD4; this interaction mediates E2 transcriptional activation function. Additionally, the interaction with host BRD4 on mitotic chromosomes mediates tethering of the viral genome. Interacts with host TOPBP1; this interaction is required for optimal viral DNA replication. In terms of processing, phosphorylated.

The protein resides in the host nucleus. Functionally, plays a role in the initiation of viral DNA replication. A dimer of E2 interacts with a dimer of E1 in order to improve specificity of E1 DNA binding activity. Once the complex recognizes and binds DNA at specific sites, the E2 dimer is removed from DNA. E2 also regulates viral transcription through binding to the E2RE response element (5'-ACCNNNNNNGGT-3') present in multiple copies in the regulatory regions of the viral genome. Activates or represses transcription depending on E2RE's position with regards to proximal promoter elements including the TATA-box. Repression occurs by sterically hindering the assembly of the transcription initiation complex. In Homo sapiens (Human), this protein is Regulatory protein E2.